The following is an 830-amino-acid chain: G-type lectin S-receptor-like serine/threonine-protein kinase SD1-13 (830 aa).

Residues 1–21 form the signal peptide; the sequence is MGCLLILLLTLICFSLRLCLA. The Bulb-type lectin domain maps to 22-145; it reads TDVITFSSEF…TNTGDEILWE (124 aa). Residues 22–434 lie on the Extracellular side of the membrane; the sequence is TDVITFSSEF…SEFKKRTNRS (413 aa). Asn-40, Asn-53, and Asn-82 each carry an N-linked (GlcNAc...) asparagine glycan. Residues 283–321 form the EGF-like; atypical domain; that stretch reads PSTKCDTYATCGQFASCRFNPGSTPPCMCIRGFKPQSYA. 2 disulfides stabilise this stretch: Cys-287–Cys-299 and Cys-293–Cys-309. N-linked (GlcNAc...) asparagine glycosylation is found at Asn-327, Asn-384, and Asn-432. The 84-residue stretch at 340 to 423 folds into the PAN domain; the sequence is CESRDNNDGS…TGVVFYIRLA (84 aa). Disulfide bonds link Cys-377–Cys-398 and Cys-381–Cys-387. The helical transmembrane segment at 435–455 threads the bilayer; sequence IVITVTLLVGAFLFAGTVVLA. Topologically, residues 456 to 830 are cytoplasmic; that stretch reads LWKIAKHREK…NVSLTKITGR (375 aa). In terms of domain architecture, Protein kinase spans 512 to 798; the sequence is FSITNKLGQG…NLPEPKQPAF (287 aa). ATP is bound by residues 518-526 and Lys-540; that span reads LGQGGFGAV. At Thr-545 the chain carries Phosphothreonine. Phosphoserine is present on residues Ser-546 and Ser-561. Positions 601-618 are caM-binding; the sequence is VKQRLLDWKTRFNIIDGI. Asp-637 (proton acceptor) is an active-site residue. Ser-641, Ser-654, and Ser-670 each carry phosphoserine. Thr-671 carries the phosphothreonine modification. Phosphoserine occurs at positions 714, 715, 726, 805, 809, 810, 813, 818, and 823. Residues 789 to 830 are disordered; sequence NLPEPKQPAFIPRRGTSEVESSGQSDPRASINNVSLTKITGR. Residues 806–830 show a composition bias toward polar residues; the sequence is EVESSGQSDPRASINNVSLTKITGR. 2 positions are modified to phosphothreonine: Thr-825 and Thr-828.

Belongs to the protein kinase superfamily. Ser/Thr protein kinase family. Interacts with PUB9, PUB13 and PUB14. Binds to calmodulin (CaM) in a Ca(2+)-dependent manner. In terms of processing, autophosphorylated. As to expression, mostly expressed in rosette leaves, and, to a lower extent, in cauline leaves and stems.

The protein resides in the cell membrane. The catalysed reaction is L-seryl-[protein] + ATP = O-phospho-L-seryl-[protein] + ADP + H(+). It carries out the reaction L-threonyl-[protein] + ATP = O-phospho-L-threonyl-[protein] + ADP + H(+). Receptor-like serine/threonine-protein kinase that represses the disease resistance signaling pathway triggered in response to bacterial pathogen such as Pseudomonas syringae pv. tomato. The chain is G-type lectin S-receptor-like serine/threonine-protein kinase SD1-13 (SD113) from Arabidopsis thaliana (Mouse-ear cress).